Here is a 512-residue protein sequence, read N- to C-terminus: 2-isopropylmalate synthase (512 aa).

The 263-residue stretch at 4–266 folds into the Pyruvate carboxyltransferase domain; that stretch reads IQFFDTTLRD…ETNIVLNQFK (263 aa). Mn(2+) contacts are provided by Asp13, His201, His203, and Asn237. The regulatory domain stretch occupies residues 390–512; the sequence is ELKHLQVQYV…TKQVDFEEVK (123 aa).

The protein belongs to the alpha-IPM synthase/homocitrate synthase family. LeuA type 1 subfamily. Homodimer. It depends on Mn(2+) as a cofactor.

It is found in the cytoplasm. It carries out the reaction 3-methyl-2-oxobutanoate + acetyl-CoA + H2O = (2S)-2-isopropylmalate + CoA + H(+). Its pathway is amino-acid biosynthesis; L-leucine biosynthesis; L-leucine from 3-methyl-2-oxobutanoate: step 1/4. In terms of biological role, catalyzes the condensation of the acetyl group of acetyl-CoA with 3-methyl-2-oxobutanoate (2-ketoisovalerate) to form 3-carboxy-3-hydroxy-4-methylpentanoate (2-isopropylmalate). In Listeria welshimeri serovar 6b (strain ATCC 35897 / DSM 20650 / CCUG 15529 / CIP 8149 / NCTC 11857 / SLCC 5334 / V8), this protein is 2-isopropylmalate synthase.